Reading from the N-terminus, the 128-residue chain is MTESLDLELDGINTEQRLLERRKAASERERLKQEVEDMVNLHQCKRGIFCVVKQAKLTYEKTTTGNRLSYKLPTQRQKLVLMVGEKPITVTQHSAETEGCLHFPYQGPEDLCTLIKTMCGIRDLIPFN.

This sequence belongs to the adenoviridae E3_15 family. In terms of assembly, may bind to host IKBKG, OPTN and RRAGA.

The protein resides in the host cytoplasm. The protein localises to the host nucleus. In terms of biological role, may prevent Nf-kappaB activation by immune signals like Tumor necrosis factor, presumably by inhibiting NFKB1 dimer DNA-binding. May act directly at the TNF receptor to inhibit signaling. This chain is Early 3 14.7 kDa protein, found in Human adenovirus C serotype 2 (HAdV-2).